Reading from the N-terminus, the 500-residue chain is L-arabinose isomerase (500 aa).

Residues E306, E333, H350, and H450 each coordinate Mn(2+).

It belongs to the arabinose isomerase family. Homohexamer. The cofactor is Mn(2+).

The enzyme catalyses beta-L-arabinopyranose = L-ribulose. It participates in carbohydrate degradation; L-arabinose degradation via L-ribulose; D-xylulose 5-phosphate from L-arabinose (bacterial route): step 1/3. In terms of biological role, catalyzes the conversion of L-arabinose to L-ribulose. The sequence is that of L-arabinose isomerase (araA) from Escherichia coli (strain K12).